The chain runs to 362 residues: Class I histocompatibility antigen, Gogo-B*0103 alpha chain (362 aa).

The signal sequence occupies residues M1–A24. Positions G25–A114 are alpha-1. The Extracellular portion of the chain corresponds to G25 to I308. N-linked (GlcNAc...) asparagine glycosylation occurs at N110. Positions G115 to A206 are alpha-2. 2 disulfide bridges follow: C125-C188 and C227-C283. The tract at residues D207 to W298 is alpha-3. The Ig-like C1-type domain maps to P209–T295. The segment at E299–I308 is connecting peptide. The helical transmembrane segment at V309–C332 threads the bilayer. Residues R333–A362 lie on the Cytoplasmic side of the membrane. A disordered region spans residues K335–A362. Residues S343–A362 are compositionally biased toward low complexity.

It belongs to the MHC class I family. Heterodimer of an alpha chain and a beta chain (beta-2-microglobulin).

The protein localises to the membrane. In terms of biological role, involved in the presentation of foreign antigens to the immune system. The polypeptide is Class I histocompatibility antigen, Gogo-B*0103 alpha chain (Gorilla gorilla gorilla (Western lowland gorilla)).